The chain runs to 117 residues: Large ribosomal subunit protein bL20 (117 aa).

The protein belongs to the bacterial ribosomal protein bL20 family.

Its function is as follows. Binds directly to 23S ribosomal RNA and is necessary for the in vitro assembly process of the 50S ribosomal subunit. It is not involved in the protein synthesizing functions of that subunit. This chain is Large ribosomal subunit protein bL20, found in Maridesulfovibrio salexigens (strain ATCC 14822 / DSM 2638 / NCIMB 8403 / VKM B-1763) (Desulfovibrio salexigens).